A 364-amino-acid chain; its full sequence is UDP-N-acetylglucosamine--N-acetylmuramyl-(pentapeptide) pyrophosphoryl-undecaprenol N-acetylglucosamine transferase (364 aa).

UDP-N-acetyl-alpha-D-glucosamine-binding positions include 13 to 15, Asn125, Arg165, Ser192, and Gln293; that span reads TGG.

This sequence belongs to the glycosyltransferase 28 family. MurG subfamily.

Its subcellular location is the cell inner membrane. The enzyme catalyses di-trans,octa-cis-undecaprenyl diphospho-N-acetyl-alpha-D-muramoyl-L-alanyl-D-glutamyl-meso-2,6-diaminopimeloyl-D-alanyl-D-alanine + UDP-N-acetyl-alpha-D-glucosamine = di-trans,octa-cis-undecaprenyl diphospho-[N-acetyl-alpha-D-glucosaminyl-(1-&gt;4)]-N-acetyl-alpha-D-muramoyl-L-alanyl-D-glutamyl-meso-2,6-diaminopimeloyl-D-alanyl-D-alanine + UDP + H(+). The protein operates within cell wall biogenesis; peptidoglycan biosynthesis. In terms of biological role, cell wall formation. Catalyzes the transfer of a GlcNAc subunit on undecaprenyl-pyrophosphoryl-MurNAc-pentapeptide (lipid intermediate I) to form undecaprenyl-pyrophosphoryl-MurNAc-(pentapeptide)GlcNAc (lipid intermediate II). This is UDP-N-acetylglucosamine--N-acetylmuramyl-(pentapeptide) pyrophosphoryl-undecaprenol N-acetylglucosamine transferase from Cereibacter sphaeroides (strain ATCC 17029 / ATH 2.4.9) (Rhodobacter sphaeroides).